Consider the following 334-residue polypeptide: Mevalonate kinase (334 aa).

110-120 (PVGAGLGSSAA) lines the ATP pocket. The active-site Proton acceptor is Asp161.

The protein belongs to the GHMP kinase family. Mevalonate kinase subfamily. Homodimer. Mg(2+) is required as a cofactor.

Its subcellular location is the cytoplasm. The catalysed reaction is (R)-mevalonate + ATP = (R)-5-phosphomevalonate + ADP + H(+). Its pathway is isoprenoid biosynthesis; isopentenyl diphosphate biosynthesis via mevalonate pathway; isopentenyl diphosphate from (R)-mevalonate: step 1/3. Functionally, catalyzes the phosphorylation of (R)-mevalonate (MVA) to (R)-mevalonate 5-phosphate (MVAP). Functions in the mevalonate (MVA) pathway leading to isopentenyl diphosphate (IPP), a key precursor for the biosynthesis of isoprenoid compounds such as archaeal membrane lipids. In Thermococcus onnurineus (strain NA1), this protein is Mevalonate kinase.